The sequence spans 127 residues: Gamma-synuclein (127 aa).

Repeat copies occupy residues 20–30 (EKTKQGVTEAA) and 31–41 (EKTKEGVMYVG). Residues 20 to 67 (EKTKQGVTEAAEKTKEGVMYVGAKTKENVVQSVTSVAEKTKEQANAVS) are 4 X 11 AA tandem repeats of [EGSA]-K-T-K-[EQ]-[GQ]-V-X(4). Residues 42–56 (AKTKENVVQSVTSVA) form a 3; approximate repeat. Residues 57–67 (EKTKEQANAVS) form repeat 4. Residues Ser67 and Ser72 each carry the phosphoserine modification. Residues 96-127 (RKEDLRPSAPQQEGEASKEKEEVAEEAQSGGD) are disordered. Residue Ser124 is modified to Phosphoserine; by BARK1, CaMK2 and CK2.

This sequence belongs to the synuclein family. May be a centrosome-associated protein. Interacts with MYOC; affects its secretion and its aggregation. Post-translationally, phosphorylated. Phosphorylation by GRK5 appears to occur on residues distinct from the residue phosphorylated by other kinases. In terms of tissue distribution, highly expressed in brain, particularly in the substantia nigra. Also expressed in the corpus callosum, heart, skeletal muscle, ovary, testis, colon and spleen. Weak expression in pancreas, kidney and lung.

It is found in the cytoplasm. Its subcellular location is the perinuclear region. The protein localises to the cytoskeleton. It localises to the microtubule organizing center. The protein resides in the centrosome. It is found in the spindle. Functionally, plays a role in neurofilament network integrity. May be involved in modulating axonal architecture during development and in the adult. In vitro, increases the susceptibility of neurofilament-H to calcium-dependent proteases. May also function in modulating the keratin network in skin. Activates the MAPK and Elk-1 signal transduction pathway. The protein is Gamma-synuclein (SNCG) of Homo sapiens (Human).